A 434-amino-acid polypeptide reads, in one-letter code: Serine hydroxymethyltransferase (434 aa).

Residue 120-122 (GHI) coordinates (6S)-5,6,7,8-tetrahydrofolate. Position 236 is an N6-(pyridoxal phosphate)lysine (Lys236). Position 255 (Glu255) interacts with (6S)-5,6,7,8-tetrahydrofolate.

It belongs to the SHMT family. Homodimer. The cofactor is pyridoxal 5'-phosphate.

Its subcellular location is the cytoplasm. Its pathway is amino-acid biosynthesis; glycine biosynthesis; glycine from L-serine: step 1/1. In terms of biological role, catalyzes the reversible interconversion of serine and glycine with a modified folate serving as the one-carbon carrier. Also exhibits a pteridine-independent aldolase activity toward beta-hydroxyamino acids, producing glycine and aldehydes, via a retro-aldol mechanism. The sequence is that of Serine hydroxymethyltransferase from Korarchaeum cryptofilum (strain OPF8).